We begin with the raw amino-acid sequence, 308 residues long: Protoheme IX farnesyltransferase (308 aa).

A run of 8 helical transmembrane segments spans residues 31-51 (VIELLLVTAIPAMLLAQRGTV), 53-73 (PLLIVNTLIGGMLAAGGANAL), 102-122 (NALVFGLVLTAGSFLWLWWTT), 124-144 (LLSGLLALATIAFYVFIYTLL), 149-169 (TSQNVVWGGAAGCMPVMIGWS), 170-190 (AVTGTIQWPALVMFAIIFFWT), 240-260 (LALATGWLYAAVAVVAGVWFL), and 288-308 (YLAVVFCALAIDSAIGLPHLF).

This sequence belongs to the UbiA prenyltransferase family. Protoheme IX farnesyltransferase subfamily.

The protein resides in the cell membrane. It carries out the reaction heme b + (2E,6E)-farnesyl diphosphate + H2O = Fe(II)-heme o + diphosphate. Its pathway is porphyrin-containing compound metabolism; heme O biosynthesis; heme O from protoheme: step 1/1. Its function is as follows. Converts heme B (protoheme IX) to heme O by substitution of the vinyl group on carbon 2 of heme B porphyrin ring with a hydroxyethyl farnesyl side group. This Mycobacterium avium (strain 104) protein is Protoheme IX farnesyltransferase.